Consider the following 229-residue polypeptide: Aminopyrimidine aminohydrolase (229 aa).

Position 44 (Asp44) interacts with substrate. Catalysis depends on Cys137, which acts as the Nucleophile. 2 residues coordinate substrate: Tyr141 and Tyr167. Residue Glu208 is the Proton donor of the active site.

Belongs to the TenA family. As to quaternary structure, homotetramer.

The enzyme catalyses 4-amino-5-aminomethyl-2-methylpyrimidine + H2O = 4-amino-5-hydroxymethyl-2-methylpyrimidine + NH4(+). It carries out the reaction thiamine + H2O = 5-(2-hydroxyethyl)-4-methylthiazole + 4-amino-5-hydroxymethyl-2-methylpyrimidine + H(+). Its pathway is cofactor biosynthesis; thiamine diphosphate biosynthesis. Its function is as follows. Catalyzes an amino-pyrimidine hydrolysis reaction at the C5' of the pyrimidine moiety of thiamine compounds, a reaction that is part of a thiamine salvage pathway. Thus, catalyzes the conversion of 4-amino-5-aminomethyl-2-methylpyrimidine to 4-amino-5-hydroxymethyl-2-methylpyrimidine (HMP). Is also able to catalyze the hydrolytic cleavage of thiamine; however, this thiaminase activity may not be physiologically relevant. Therefore, is probably involved in the regeneration of the thiamine pyrimidine from thiamine degraded products present in the environment, rather than in thiamine degradation. The sequence is that of Aminopyrimidine aminohydrolase from Staphylococcus aureus (strain MRSA252).